We begin with the raw amino-acid sequence, 406 residues long: Phloroisovalerophenone synthase (406 aa).

Cys171 is a catalytic residue.

It belongs to the thiolase-like superfamily. Chalcone/stilbene synthases family.

It carries out the reaction 3-methylbutanoyl-CoA + 3 malonyl-CoA + 3 H(+) = phlorisovalerophenone + 3 CO2 + 4 CoA. Its function is as follows. Produces 3-methyl-1-(2,4,6-trihydroxyphenyl)butan-1-one (phloroisovalerophenone). The sequence is that of Phloroisovalerophenone synthase (VPS) from Psilotum nudum (Whisk fern).